Reading from the N-terminus, the 501-residue chain is Sucrose-6-phosphate hydrolase (501 aa).

Substrate-binding positions include 44 to 47, Gln63, 106 to 107, 167 to 168, and Glu222; these read LLND, YT, and RD. Asp47 is a catalytic residue.

This sequence belongs to the glycosyl hydrolase 32 family.

It carries out the reaction Hydrolysis of terminal non-reducing beta-D-fructofuranoside residues in beta-D-fructofuranosides.. It functions in the pathway glycan biosynthesis; sucrose metabolism. This chain is Sucrose-6-phosphate hydrolase (scrB), found in Pediococcus pentosaceus.